Consider the following 47-residue polypeptide: PhoP/PhoQ regulator MgrB (47 aa).

A helical transmembrane segment spans residues 6–26 (WVALVVVVLACLLLWAQVFNM).

It belongs to the MgrB family. In terms of assembly, may form homooligomers. Probably interacts with the periplasmic domain of PhoQ.

The protein resides in the cell inner membrane. PhoP-regulated transcription is redox-sensitive, being activated when the periplasm becomes more reducing. MgrB acts between DsbA/DsbB and PhoP/PhoQ in this pathway. Represses PhoP/PhoQ signaling, possibly by binding to the periplasmic domain of PhoQ, altering its activity and that of downstream effector PhoP. The sequence is that of PhoP/PhoQ regulator MgrB from Escherichia coli O127:H6 (strain E2348/69 / EPEC).